Consider the following 285-residue polypeptide: PHO85 cyclin-7 (285 aa).

The span at 1–14 (MELSSPSKKTTTSP) shows a compositional bias: low complexity. Positions 1-42 (MELSSPSKKTTTSPINIPGGNRDNLIIGPHSHSFKTDPFSSN) are disordered. Phosphoserine is present on Ser-69.

It belongs to the cyclin family. PHO80 subfamily. In terms of assembly, forms a cyclin-CDK complex with PHO85. Interacts with the substrate proteins MMR1 and YJL084C. Interacts with the CDK inhibitor (CKI) PHO81.

The protein resides in the cytoplasm. Its activity is regulated as follows. The PCL7-PHO85 cyclin-CDK is inhibited by PHO81 in low-phosphate conditions. Cyclin partner of the cyclin-dependent kinase (CDK) PHO85. Together with cyclin PCL6, controls glycogen phosphorylase and glycogen synthase activities in response to nutrient availablility. The PCL7-PHO85 cyclin-CDK holoenzyme has GLC8 kinase activity and phosphorylates and inactivates the phosphatase PP1-2 inhibitor GLC8, causing activation of PP1-2, which then dephosphorylates and activates glycogen phosphorylase. PCL7-PHO85 also phosphorylates MMR1 and YJL084C. The protein is PHO85 cyclin-7 (PCL7) of Saccharomyces cerevisiae (strain ATCC 204508 / S288c) (Baker's yeast).